The following is a 590-amino-acid chain: uncharacterized protein (590 aa).

The segment at 330–368 (IDKSESDIDDSESDIDSENDIDSESDIDDSETDDEEELE) is disordered. The segment covering 336–368 (DIDDSESDIDSENDIDSESDIDDSETDDEEELE) has biased composition (acidic residues).

This sequence belongs to the mimivirus L5 family.

This is an uncharacterized protein from Acanthamoeba polyphaga mimivirus (APMV).